Consider the following 604-residue polypeptide: Serine/threonine-protein kinase A-Raf (604 aa).

Positions 19–91 constitute an RBD domain; it reads GTVKVYLPNK…DGEELIVEVL (73 aa). The segment at 98-144 adopts a Phorbol-ester/DAG-type zinc-finger fold; the sequence is MHNFVRKTFFSLAFCDFCLKFLFHGFRCQTCGYKFHQHCSSKVPTVC. Residues His99, Cys112, Cys115, Cys125, Cys128, His133, Cys136, and Cys144 each coordinate Zn(2+). Ser157 and Ser162 each carry phosphoserine. Disordered regions lie at residues 177–222 and 241–288; these read NELL…HMVS and TDAA…EKKK. The residue at position 181 (Thr181) is a Phosphothreonine. At Ser186 the chain carries Phosphoserine. Over residues 210 to 222 the composition is skewed to polar residues; the sequence is IRSTSTPNVHMVS. Residues 252-265 are compositionally biased toward low complexity; the sequence is PRGSPSPASVSSGR. Phosphoserine is present on residues Ser255 and Ser267. Over residues 272 to 287 the composition is skewed to basic and acidic residues; it reads LPSEQRERKSLADEKK. One can recognise a Protein kinase domain in the interval 308-568; it reads VQLLKRIGTG…PQILATIELL (261 aa). ATP contacts are provided by residues 314–322 and Lys334; that span reads IGTGSFGTV. The residue at position 316 (Thr316) is a Phosphothreonine. Asp427 acts as the Proton acceptor in catalysis.

This sequence belongs to the protein kinase superfamily. TKL Ser/Thr protein kinase family. RAF subfamily. As to quaternary structure, interacts with TH1L/NELFD. Zn(2+) serves as cofactor. In terms of processing, dephosphorylation by the SHOC2-MRAS-PP1c (SMP) complex consisting of SHOC2, GTP-bound M-Ras/MRAS and the catalytic subunit of protein phosphatase 1 (PPP1CA, PPP1CB or PPP1CC); this relieves inactivation and stimulates kinase activity.

It carries out the reaction L-seryl-[protein] + ATP = O-phospho-L-seryl-[protein] + ADP + H(+). It catalyses the reaction L-threonyl-[protein] + ATP = O-phospho-L-threonyl-[protein] + ADP + H(+). Involved in the transduction of mitogenic signals from the cell membrane to the nucleus. May also regulate the TOR signaling cascade. Phosphorylates PFKFB2. The chain is Serine/threonine-protein kinase A-Raf (Araf) from Mus musculus (Mouse).